Reading from the N-terminus, the 320-residue chain is TPR repeat-containing protein MJ0263 (320 aa).

TPR repeat units lie at residues 12 to 45, 46 to 79, 80 to 113, 114 to 147, 148 to 181, 182 to 215, 216 to 249, 250 to 283, and 289 to 320; these read ILKDVVNALECADKGNFDKALEYLEKAQKVDKDN, PLVLYVKGIVLKLKGDMEKAEKYFECLENIEGTS, LLSLGNLICLTFVKGEYERTLKYIEKLSRLSKPC, YLSPFHKALIYIEFGEFEKALEALDEFLKIYPNL, TSILRQKASILEILGKLDEALDCVNKILSIKKDD, AHAWYLKGRILKKLGNIKEALDALKMAINLNENL, VHVYKDIAYLELANNNYEEALNYITKYLEKFPND, VEAKFYLALIYENLNKVDDALKIYDKIISNKNVK, and KSSILNKARILEKLGKIEEAVETYNKAFDNNI.

This is TPR repeat-containing protein MJ0263 from Methanocaldococcus jannaschii (strain ATCC 43067 / DSM 2661 / JAL-1 / JCM 10045 / NBRC 100440) (Methanococcus jannaschii).